The sequence spans 244 residues: NAD-dependent protein deacetylase (244 aa).

Residues 1–244 form the Deacetylase sirtuin-type domain; the sequence is MTGEQLAHWI…LSAVQRAVMP (244 aa). Residues Ala-22, Thr-26, Phe-33, Arg-34, Gln-103, Ile-105, Asp-106, and His-121 each coordinate NAD(+). Phe-33 is a binding site for nicotinamide. Ile-105 and Asp-106 together coordinate nicotinamide. His-121 (proton acceptor) is an active-site residue. The Zn(2+) site is built by Cys-129, Cys-132, Cys-150, and Cys-152. Positions 190, 191, 213, and 231 each coordinate NAD(+).

Belongs to the sirtuin family. Class U subfamily. The cofactor is Zn(2+).

It localises to the cytoplasm. It catalyses the reaction N(6)-acetyl-L-lysyl-[protein] + NAD(+) + H2O = 2''-O-acetyl-ADP-D-ribose + nicotinamide + L-lysyl-[protein]. Functionally, NAD-dependent protein deacetylase which modulates the activities of several enzymes which are inactive in their acetylated form. In Cutibacterium acnes (strain DSM 16379 / KPA171202) (Propionibacterium acnes), this protein is NAD-dependent protein deacetylase.